Consider the following 1914-residue polypeptide: Fatty acid synthase beta subunit stcK (1914 aa).

The interval 17–395 (LYACFGGQGP…LEGTGMNVVN (379 aa)) is acetyltransferase (AT) domain. The tract at residues 446-692 (TRLLGTPHVM…LIVEAPGVKD (247 aa)) is enoyl reductase (ER) domain. A dehydratase (DH) domain region spans residues 1009 to 1509 (GECAWGYAAL…RANDRLRMEI (501 aa)). The 135-residue stretch at 1398 to 1532 (FLNRHGAPRV…VRVLKESTGE (135 aa)) folds into the MaoC-like domain. Positions 1548–1900 (YVFTGQGTQE…IRLVQGVTQS (353 aa)) are malonyl/palmitoyl transferase (MT/PT) domain.

This sequence belongs to the fungal fatty acid synthetase subunit beta family. In terms of assembly, [Alpha(6)beta(6)] hexamers of two multifunctional subunits (alpha and beta).

The catalysed reaction is acetyl-CoA + n malonyl-CoA + 2n NADPH + 4n H(+) = a long-chain-acyl-CoA + n CoA + n CO2 + 2n NADP(+).. It carries out the reaction holo-[ACP] + acetyl-CoA = acetyl-[ACP] + CoA. The enzyme catalyses holo-[ACP] + malonyl-CoA = malonyl-[ACP] + CoA. It catalyses the reaction a (3R)-hydroxyacyl-[ACP] = a (2E)-enoyl-[ACP] + H2O. The catalysed reaction is a 2,3-saturated acyl-[ACP] + NAD(+) = a (2E)-enoyl-[ACP] + NADH + H(+). It carries out the reaction (9Z)-octadecenoyl-[ACP] + H2O = (9Z)-octadecenoate + holo-[ACP] + H(+). It participates in mycotoxin biosynthesis; sterigmatocystin biosynthesis. In terms of biological role, fatty acid synthase beta subunit; part of the gene cluster that mediates the biosynthesis of sterigmatocystin (ST), a polyketide-derived furanocoumarin which is part of the most toxic and carcinogenic compounds among the known mycotoxins. The first step in the biosynthesis of sterigmatocystin is the production of hexanoate by the fatty acid synthase (FAS) units stcJ and stcK. The polyketide backbone is assembled by the non-reducing polyketide synthase stcA by condensation of the starter hexanoyl-CoA and 7 malonyl-CoA extender units followed by cyclization and release of norsolorinic acid. Norsolorinic acid is the first stable intermediate in the biosynthesis of sterigmatocystin and is converted into averantin (AVN) by the ketoreductase stcE which reduces the hexanoate ketone to an alcohol. Averantin is then oxidized into 5'-hydroxyaverantin (HAVN) by the cytochrome P450 monooxygenase stcF. 5'-hydroxyaverantin is further converted to 5'-oxyaverantin (OAVN) by the 5'-hydroxyaverantin dehydrogenase stcG. The next step is the conversion of OAVN into averufin (AVF) which is catalyzed by a yet to be identified enzyme. The cytochrome P450 monooxygenase stcB and the flavin-binding monooxygenase stcW are both required for the conversion of averufin to 1-hydroxyversicolorone. The esterase stcI probably catalyzes the formation of versiconal hemiacetal acetate from 1-hydroxyversicolorone. The oxydoreductase stcN then probably catalyzes the biosynthetic step from versiconal to versicolorin B (VERB). The next step is performed by the versicolorin B desaturase stcL to produce versicolorin A (VERA). The ketoreductase stcU and the cytochrome P450 monooxygenase stcS are involved in the conversion of versicolorin A to demethylsterigmatocystin. The Baeyer-Villiger oxidas stcQ and the reductase stcR might be involved in the biosynthetic step from versicolorin A to demethylsterigmatocystin. The final step in the biosynthesis of sterigmatocystin is the methylation of demethylsterigmatocystin catalyzed by the methyltransferase stcP. The chain is Fatty acid synthase beta subunit stcK from Emericella nidulans (strain FGSC A4 / ATCC 38163 / CBS 112.46 / NRRL 194 / M139) (Aspergillus nidulans).